The chain runs to 688 residues: Glycine--tRNA ligase beta subunit (688 aa).

This sequence belongs to the class-II aminoacyl-tRNA synthetase family. Tetramer of two alpha and two beta subunits.

The protein localises to the cytoplasm. The enzyme catalyses tRNA(Gly) + glycine + ATP = glycyl-tRNA(Gly) + AMP + diphosphate. In Listeria monocytogenes serotype 4a (strain HCC23), this protein is Glycine--tRNA ligase beta subunit.